Consider the following 512-residue polypeptide: Protein SHC1 (512 aa).

A compositionally biased stretch (acidic residues) spans glutamate 101–alanine 113. Disordered regions lie at residues glutamate 101–glutamine 122 and aspartate 144–leucine 165. 4 Sel1-like repeats span residues proline 318 to histidine 353, isoleucine 354 to histidine 389, proline 390 to serine 429, and cysteine 433 to histidine 470.

The protein belongs to the SKT5 family.

It localises to the cytoplasm. The protein localises to the cytoplasmic granule membrane. In terms of biological role, required for the activation of chitin synthase III (CHS3) activity during the sporulation process. This chain is Protein SHC1 (SHC1), found in Saccharomyces cerevisiae (strain YJM789) (Baker's yeast).